The chain runs to 1071 residues: SLIT-ROBO Rho GTPase-activating protein 2 (1071 aa).

Residues 22–325 (KEIRAQLTEQ…AVENLDATSD (304 aa)) form the F-BAR domain. The span at 181–203 (LKEAEKQEEKQIGKSVKQEDRQT) shows a compositional bias: basic and acidic residues. Positions 181–211 (LKEAEKQEEKQIGKSVKQEDRQTPRSPDSTA) are disordered. Serine 206 is modified (phosphoserine). The stretch at 363-401 (QSELVQRCQQLQSRLSTLKIENEEVKKTMEATLQTIQDI) forms a coiled coil. Phosphoserine is present on residues serine 427, serine 500, serine 691, and serine 695. One can recognise a Rho-GAP domain in the interval 489–679 (ARRSSTVRKQ…TIIIQHENIF (191 aa)). Residues 700-726 (CDSTHGETTSAEDSTQDVTAEHHTSDD) are disordered. Over residues 705–717 (GETTSAEDSTQDV) the composition is skewed to polar residues. Position 724 is a phosphoserine (serine 724). Positions 728 to 787 (CEPIEAIAKFDYVGRTARELSFKKGASLLLYQRASDDWWEGRHNGIDGLIPHQYIVVQDT) constitute an SH3 domain. Serine 795 is modified (phosphoserine). Disordered stretches follow at residues 795-819 (SSPK…TGAS) and 838-918 (RKRP…DSPQ). The segment covering 855-868 (HGLGSSLTDSSSLG) has biased composition (low complexity). Composition is skewed to polar residues over residues 874 to 885 (RPSSQPIMSQNL) and 897 to 907 (GHGSLNSISRH). Serine 916 carries the phosphoserine modification. A Symmetric dimethylarginine; by PRMT5 modification is found at arginine 927. A Phosphoserine modification is found at serine 930. A coiled-coil region spans residues 940–968 (EVIAQDIEATMNSALNELQELERQSSAKH). The segment at 984–1012 (PVVAPTSEPSSPLHTQLLKDPEPAFQRSA) is disordered. Phosphoserine occurs at positions 990, 994, 1013, and 1027. The interval 1029 to 1071 (KMAAPVKPPATRPKPTVFPKTNATSPGVNSSASPQATDKSCTV) is disordered. Over residues 1047-1071 (PKTNATSPGVNSSASPQATDKSCTV) the composition is skewed to polar residues.

In terms of assembly, homodimer. Forms a heterooligomer with SRGAP1 and SRGAP3 through its F-BAR domain. Interacts (via SH3 domain) with GPHN. Interacts (via SH3 domain) with FMNL1 (activated by RAC1); regulates the actin filament severing activity of FMNL1 and actin dynamics. Interacts (via SH3 domain) with FMNL3. Interacts with RAC1; specifically stimulates RAC1 GTPase activity. Interacts (via F-BAR domain) with HOMER1. Interacts with ROBO1 and ROBO2. Interacts with FASLG. Interacts with PRMT5. Post-translationally, methylation at Arg-927 is required for the stimulation of cell migration, dimerization and localization at the plasma membrane protrusions.

It is found in the cell membrane. The protein resides in the cell projection. The protein localises to the dendritic spine. It localises to the postsynaptic density. Its subcellular location is the postsynaptic cell membrane. It is found in the lamellipodium. The protein resides in the cytoplasmic vesicle. The protein localises to the phagosome. It localises to the nucleus. Its subcellular location is the cytoplasm. It is found in the cytosol. Its function is as follows. Postsynaptic RAC1 GTPase activating protein (GAP) that plays a key role in neuronal morphogenesis and migration mainly during development of the cerebral cortex. Regulates excitatory and inhibitory synapse maturation and density in cortical pyramidal neurons. SRGAP2/SRGAP2A limits excitatory and inhibitory synapse density through its RAC1-specific GTPase activating activity, while it promotes maturation of both excitatory and inhibitory synapses through its ability to bind to the postsynaptic scaffolding protein HOMER1 at excitatory synapses, and the postsynaptic protein GPHN at inhibitory synapses. Mechanistically, acts by binding and deforming membranes, thereby regulating actin dynamics to regulate cell migration and differentiation. Promotes cell repulsion and contact inhibition of locomotion: localizes to protrusions with curved edges and controls the duration of RAC1 activity in contact protrusions. In non-neuronal cells, may also play a role in cell migration by regulating the formation of lamellipodia and filopodia. This Mus musculus (Mouse) protein is SLIT-ROBO Rho GTPase-activating protein 2.